A 387-amino-acid polypeptide reads, in one-letter code: tRNA pseudouridine synthase B (387 aa).

Aspartate 43 (nucleophile) is an active-site residue.

This sequence belongs to the pseudouridine synthase TruB family. Type 1 subfamily.

It catalyses the reaction uridine(55) in tRNA = pseudouridine(55) in tRNA. Its function is as follows. Responsible for synthesis of pseudouridine from uracil-55 in the psi GC loop of transfer RNAs. The sequence is that of tRNA pseudouridine synthase B from Bifidobacterium longum (strain NCC 2705).